Here is a 332-residue protein sequence, read N- to C-terminus: Casein kinase II subunit alpha (332 aa).

In terms of domain architecture, Protein kinase spans 34-319 (YEVVRKVGRG…ALEAMTHPYF (286 aa)). ATP is bound by residues 40–48 (VGRGKYSEV) and lysine 63. The active-site Proton acceptor is aspartate 151.

The protein belongs to the protein kinase superfamily. Ser/Thr protein kinase family. CK2 subfamily. In terms of assembly, tetramer of two alpha and two beta chains (possible).

The catalysed reaction is L-seryl-[protein] + ATP = O-phospho-L-seryl-[protein] + ADP + H(+). It catalyses the reaction L-threonyl-[protein] + ATP = O-phospho-L-threonyl-[protein] + ADP + H(+). In terms of biological role, casein kinases are operationally defined by their preferential utilization of acidic proteins such as caseins as substrates. The alpha chain contains the catalytic site. The protein is Casein kinase II subunit alpha (ACK2) of Zea mays (Maize).